The primary structure comprises 178 residues: Inner membrane-spanning protein YciB (178 aa).

The next 5 helical transmembrane spans lie at Leu-12–Val-32, Pro-50–His-70, Phe-74–Asp-94, Leu-120–Phe-140, and Ala-145–Ala-165.

It belongs to the YciB family.

It is found in the cell inner membrane. Plays a role in cell envelope biogenesis, maintenance of cell envelope integrity and membrane homeostasis. The protein is Inner membrane-spanning protein YciB of Laribacter hongkongensis (strain HLHK9).